The following is a 206-amino-acid chain: MKNSPTVEKLIESFTLLPGVGKKTAERYTFFLINQKNKNKILYLSKHLKELVNNIKSCNICGYITEKNICNFCSDSQRDHSTIMIVADNRDVYCFEKINHYHGLYHILGGLIDFSRCIKPENLNFNSLKDRLKTIKEIIIATNSTLEGEITATYSKKFLKKYLKDEKIKITKLAYGIPIGLDFNYLDEKTLCNAINNRNNFKGENE.

The C4-type zinc-finger motif lies at 58–73 (CNICGYITEKNICNFC). In terms of domain architecture, Toprim spans 81-178 (STIMIVADNR…KITKLAYGIP (98 aa)).

It belongs to the RecR family.

In terms of biological role, may play a role in DNA repair. It seems to be involved in an RecBC-independent recombinational process of DNA repair. It may act with RecF and RecO. This Phytoplasma mali (strain AT) protein is Recombination protein RecR.